The sequence spans 388 residues: S-adenosylmethionine synthase (388 aa).

His17 contributes to the ATP binding site. Position 19 (Asp19) interacts with Mg(2+). Glu45 serves as a coordination point for K(+). Residues Glu58 and Gln102 each contribute to the L-methionine site. Residues 102–112 (QSVHIAQGVDA) form a flexible loop region. Residues 167 to 169 (DAK), Asp241, 247 to 248 (RK), Ala264, and Lys268 each bind ATP. Asp241 is a binding site for L-methionine. Lys272 contacts L-methionine.

This sequence belongs to the AdoMet synthase family. In terms of assembly, homotetramer; dimer of dimers. It depends on Mg(2+) as a cofactor. K(+) serves as cofactor.

The protein resides in the cytoplasm. The catalysed reaction is L-methionine + ATP + H2O = S-adenosyl-L-methionine + phosphate + diphosphate. It participates in amino-acid biosynthesis; S-adenosyl-L-methionine biosynthesis; S-adenosyl-L-methionine from L-methionine: step 1/1. In terms of biological role, catalyzes the formation of S-adenosylmethionine (AdoMet) from methionine and ATP. The overall synthetic reaction is composed of two sequential steps, AdoMet formation and the subsequent tripolyphosphate hydrolysis which occurs prior to release of AdoMet from the enzyme. The polypeptide is S-adenosylmethionine synthase (Maricaulis maris (strain MCS10) (Caulobacter maris)).